The following is a 79-amino-acid chain: ATP synthase subunit c (79 aa).

The next 2 membrane-spanning stretches (helical) occupy residues 11–31 (IAVA…IGIL) and 53–73 (FFVV…LGLY).

This sequence belongs to the ATPase C chain family. F-type ATPases have 2 components, F(1) - the catalytic core - and F(0) - the membrane proton channel. F(1) has five subunits: alpha(3), beta(3), gamma(1), delta(1), epsilon(1). F(0) has three main subunits: a(1), b(2) and c(10-14). The alpha and beta chains form an alternating ring which encloses part of the gamma chain. F(1) is attached to F(0) by a central stalk formed by the gamma and epsilon chains, while a peripheral stalk is formed by the delta and b chains.

The protein localises to the cell membrane. In terms of biological role, f(1)F(0) ATP synthase produces ATP from ADP in the presence of a proton or sodium gradient. F-type ATPases consist of two structural domains, F(1) containing the extramembraneous catalytic core and F(0) containing the membrane proton channel, linked together by a central stalk and a peripheral stalk. During catalysis, ATP synthesis in the catalytic domain of F(1) is coupled via a rotary mechanism of the central stalk subunits to proton translocation. Functionally, key component of the F(0) channel; it plays a direct role in translocation across the membrane. A homomeric c-ring of between 10-14 subunits forms the central stalk rotor element with the F(1) delta and epsilon subunits. The polypeptide is ATP synthase subunit c (Buchnera aphidicola subsp. Acyrthosiphon pisum (strain 5A)).